A 359-amino-acid chain; its full sequence is Peptide chain release factor 1 (359 aa).

Q236 is modified (N5-methylglutamine). Positions 286 to 305 (KKEMERSTMRKSQIGSGDRS) are disordered.

The protein belongs to the prokaryotic/mitochondrial release factor family. Methylated by PrmC. Methylation increases the termination efficiency of RF1.

The protein localises to the cytoplasm. Peptide chain release factor 1 directs the termination of translation in response to the peptide chain termination codons UAG and UAA. This chain is Peptide chain release factor 1, found in Wolbachia pipientis wMel.